We begin with the raw amino-acid sequence, 338 residues long: Lipoate-protein ligase A (338 aa).

Residues 29–216 (PATQRVLFLW…AFFAHYGERV (188 aa)) form the BPL/LPL catalytic domain. Residues Arg-71, 76–79 (GAVF), and Lys-134 each bind ATP. Residue Lys-134 coordinates (R)-lipoate.

The protein belongs to the LplA family. As to quaternary structure, monomer.

The protein resides in the cytoplasm. The enzyme catalyses L-lysyl-[lipoyl-carrier protein] + (R)-lipoate + ATP = N(6)-[(R)-lipoyl]-L-lysyl-[lipoyl-carrier protein] + AMP + diphosphate + H(+). The protein operates within protein modification; protein lipoylation via exogenous pathway; protein N(6)-(lipoyl)lysine from lipoate: step 1/2. It functions in the pathway protein modification; protein lipoylation via exogenous pathway; protein N(6)-(lipoyl)lysine from lipoate: step 2/2. Functionally, catalyzes both the ATP-dependent activation of exogenously supplied lipoate to lipoyl-AMP and the transfer of the activated lipoyl onto the lipoyl domains of lipoate-dependent enzymes. The chain is Lipoate-protein ligase A from Escherichia coli (strain K12 / MC4100 / BW2952).